The following is a 376-amino-acid chain: PqqA peptide cyclase (376 aa).

A Radical SAM core domain is found at 4–219 (VPPPLSVLLE…VETARRSLGD (216 aa)). [4Fe-4S] cluster-binding residues include C18, C22, and C25.

This sequence belongs to the radical SAM superfamily. PqqE family. In terms of assembly, interacts with PqqD. The interaction is necessary for activity of PqqE. [4Fe-4S] cluster is required as a cofactor.

The catalysed reaction is [PQQ precursor protein] + S-adenosyl-L-methionine = E-Y cross-linked-[PQQ precursor protein] + 5'-deoxyadenosine + L-methionine + H(+). The protein operates within cofactor biosynthesis; pyrroloquinoline quinone biosynthesis. Functionally, catalyzes the cross-linking of a glutamate residue and a tyrosine residue in the PqqA protein as part of the biosynthesis of pyrroloquinoline quinone (PQQ). This is PqqA peptide cyclase from Xanthomonas campestris pv. campestris (strain 8004).